A 414-amino-acid chain; its full sequence is Histidine--tRNA ligase (414 aa).

Belongs to the class-II aminoacyl-tRNA synthetase family. As to quaternary structure, homodimer.

It localises to the cytoplasm. The catalysed reaction is tRNA(His) + L-histidine + ATP = L-histidyl-tRNA(His) + AMP + diphosphate + H(+). The protein is Histidine--tRNA ligase of Endomicrobium trichonymphae.